A 337-amino-acid chain; its full sequence is MNSTCIEEQHDLDHYLFPIVYIFVIIVSIPANIGSLCVSFLQAKKESELGIYLFSLSLSDLLYALTLPLWIDYTWNKDNWTFSPALCKGSAFLMYMNFYSSTAFLTCIAVDRYLAVVYPLKFFFLRTRRFALMVSLSIWILETIFNAVMLWEDETVVEYCDAEKSNFTLCYDKYPLEKWQINLNLFRTCTGYAIPLVTILICNRKVYQAVRHNKATENKEKKRIIKLLVSITVTFVLCFTPFHVMLLIRCILEHAVNFEDHSNSGKRTYTMYRITVALTSLNCVADPILYCFVTETGRYDMWNILKFCTGRCNTSQRQRKRILSVSTKDTMELEVLE.

At 1–5 (MNSTC) the chain is on the extracellular side. A glycan (N-linked (GlcNAc...) asparagine) is linked at Asn2. 2 disulfide bridges follow: Cys5–Cys160 and Cys87–Cys170. The helical transmembrane segment at 6–42 (IEEQHDLDHYLFPIVYIFVIIVSIPANIGSLCVSFLQ) threads the bilayer. At 43 to 46 (AKKE) the chain is on the cytoplasmic side. The helical transmembrane segment at 47–77 (SELGIYLFSLSLSDLLYALTLPLWIDYTWNK) threads the bilayer. Over 78-82 (DNWTF) the chain is Extracellular. A glycan (N-linked (GlcNAc...) asparagine) is linked at Asn79. Residues 83–118 (SPALCKGSAFLMYMNFYSSTAFLTCIAVDRYLAVVY) traverse the membrane as a helical segment. Residues 119 to 126 (PLKFFFLR) lie on the Cytoplasmic side of the membrane. Residues 127–153 (TRRFALMVSLSIWILETIFNAVMLWED) form a helical membrane-spanning segment. Residues 154 to 174 (ETVVEYCDAEKSNFTLCYDKY) lie on the Extracellular side of the membrane. Residues 154 to 174 (ETVVEYCDAEKSNFTLCYDKY) form an extracellular loop 2 (ECL2) region. Asn166 carries N-linked (GlcNAc...) asparagine glycosylation. A helical transmembrane segment spans residues 175-212 (PLEKWQINLNLFRTCTGYAIPLVTILICNRKVYQAVRH). Topologically, residues 213–216 (NKAT) are cytoplasmic. Residues 217-252 (ENKEKKRIIKLLVSITVTFVLCFTPFHVMLLIRCIL) traverse the membrane as a helical segment. At 253-264 (EHAVNFEDHSNS) the chain is on the extracellular side. A helical membrane pass occupies residues 265-293 (GKRTYTMYRITVALTSLNCVADPILYCFV). The Cytoplasmic portion of the chain corresponds to 294–337 (TETGRYDMWNILKFCTGRCNTSQRQRKRILSVSTKDTMELEVLE).

The protein belongs to the G-protein coupled receptor 1 family. Predominantly expressed in thymus, spleen, lymph nodes, small intestine, lung, placenta and peripheral blood leukocytes.

The protein localises to the cell membrane. It localises to the early endosome membrane. It is found in the late endosome membrane. Activated by a network of residues that connects an extracellular-facing cavity to Glu-142, a conserved charged residue buried in the transmembrane core of the receptor. Protonation likely drives conformational changes in extracellular loop 2 (ECL2), which stabilizes movement of transmembrane 3 (TM3) and a series of rearrangements that connect the extracellular-facing cavity to Glu-142, a residue only conserved in proton-sensing G-protein coupled receptors. Activated by BTB09089, a positive allosteric modulator. Functionally, proton-sensing G-protein coupled receptor activated by extracellular pH, which is required to monitor pH changes and generate adaptive reactions. Activated by an optimal pH of 7.4. Ligand binding causes a conformation change that triggers signaling via guanine nucleotide-binding proteins (G proteins) and modulates the activity of downstream effectors, such as adenylate cyclase. GPR65 is mainly coupled to G(s) G proteins and mediates activation of adenylate cyclase activity. May also act as a receptor for the glycosphingolipid psychosine (PSY) and several related glycosphingolipids. Plays a role in immune response by maintaining lysosome function and regulating T-cell metabolism. Acts as a regulator of inflammation by mediating pH-sensing of extracellular acidification which takes place in inflamed tissues: activation regulates endo-lysosomal function of immune cells and T-cell metabolism. Constitutively active in endosomes and stimulates adenylate cyclase production from endosomes independently from extracellular pH changes. In Homo sapiens (Human), this protein is G-protein coupled receptor 65.